A 346-amino-acid chain; its full sequence is Serpentine receptor class gamma-20 (346 aa).

7 helical membrane passes run 27–47, 69–89, 106–128, 157–177, 212–232, 254–274, and 279–299; these read VMLSILEYLVQATYLSVSAVL, FFVLYAAEAVMNVYSCVIEVL, PFFFTPSILTKLYFLLNHYCLAF, ILAPVLVSLFVLPLGVTWNIL, IPCLFLMIVFFLASIFGLTML, TMLFAIAQIYFAFLAGYLPGI, and LLISFNVFDVLYVYSPIALIL.

Belongs to the nematode receptor-like protein srg family.

It localises to the membrane. This is Serpentine receptor class gamma-20 (srg-20) from Caenorhabditis elegans.